The following is a 189-amino-acid chain: Peptidyl-tRNA hydrolase (189 aa).

A tRNA-binding site is contributed by Y15. The Proton acceptor role is filled by H20. Residues F66, N68, and N114 each coordinate tRNA.

The protein belongs to the PTH family. As to quaternary structure, monomer.

The protein resides in the cytoplasm. It catalyses the reaction an N-acyl-L-alpha-aminoacyl-tRNA + H2O = an N-acyl-L-amino acid + a tRNA + H(+). In terms of biological role, hydrolyzes ribosome-free peptidyl-tRNAs (with 1 or more amino acids incorporated), which drop off the ribosome during protein synthesis, or as a result of ribosome stalling. Functionally, catalyzes the release of premature peptidyl moieties from peptidyl-tRNA molecules trapped in stalled 50S ribosomal subunits, and thus maintains levels of free tRNAs and 50S ribosomes. The polypeptide is Peptidyl-tRNA hydrolase (Streptococcus pneumoniae serotype 2 (strain D39 / NCTC 7466)).